A 653-amino-acid chain; its full sequence is MIPPQEASARRREIEDKLKQEEETLSFIRDSLEKSDQLTKNMVSILSSFESRLMKLENSIIPVHKQTENLQRLQENVEKTLSCLDHVISYYHVASDTEKIIREGPTGRLEEYLGSMAKIQKAVEYFQDNSPDSPELNKVKLLFERGKESLESEFRSLMTRHSKVISPVLVLDLISADDELEVQEDVVLEHLPESVLQDVIRISRWLVEYGRNQDFMNVYYQIRSSQLDRSIKGLKEHFRKSSSSSGVPYSPAIPNKRKDTPTKKPIKRPGRDDMLDVETDAYIHCVSAFVRLAQSEYQLLMGIIPEHHQKKTFDSLIQDALDGLMLEGENIVSAARKAIIRHDFSTVLTVFPILRHLKQTKPEFDQVLQGTAASTKNKLPGLITSMETIGAKALEDFADNIKNDPDKEYNMPKDGTVHELTSNAILFLQQLLDFQETAGAMLASQETSSSATSYNSEFSKRLLSTYICKVLGNLQLNLLSKSKVYEDPALSAIFLHNNYNYILKSLEKSELIQLVAVTQKTAERSYREHIEQQIQTYQRSWLKVTDYIAEKNLPVFQPGVKLRDKERQMIKERFKGFNDGLEELCKIQKAWAIPDTEQRDKIRQAQKSIVKETYGAFLHRYSSVPFTKNPEKYIKYRVEQVGDMIDRLFDTSA.

The interval 1–384 (MIPPQEASAR…TKNKLPGLIT (384 aa)) is SEC8 and ARHQ binding. 2 coiled-coil regions span residues 5–42 (QEAS…TKNM) and 63–85 (VHKQ…SCLD). A Phosphoserine modification is found at serine 133. Residues 238 to 272 (FRKSSSSSGVPYSPAIPNKRKDTPTKKPIKRPGRD) are disordered.

This sequence belongs to the EXO70 family. The exocyst complex is composed of EXOC1, EXOC2, EXOC3, EXOC4, EXOC5, EXOC6, EXOC7 and EXOC8. Interacts with ARHQ in a GTP-dependent manner. Interacts with RAB11FIP3.

The protein resides in the cytoplasm. It is found in the cytosol. Its subcellular location is the cell membrane. The protein localises to the midbody. It localises to the midbody ring. Its function is as follows. Component of the exocyst complex involved in the docking of exocytic vesicles with fusion sites on the plasma membrane. In adipocytes, plays a crucial role in targeting SLC2A4 vesicle to the plasma membrane in response to insulin, perhaps directing the vesicle to the precise site of fusion. It is required for neuron survival and plays an essential role in cortical development. The chain is Exocyst complex component 7 (Exoc7) from Rattus norvegicus (Rat).